The following is a 154-amino-acid chain: Sperm microtubule associated protein 1 (154 aa).

The sequence is that of Sperm microtubule associated protein 1 from Homo sapiens (Human).